A 261-amino-acid chain; its full sequence is tRNA pseudouridine synthase A (261 aa).

Catalysis depends on D51, which acts as the Nucleophile. Position 109 (Y109) interacts with substrate.

Belongs to the tRNA pseudouridine synthase TruA family. As to quaternary structure, homodimer.

The catalysed reaction is uridine(38/39/40) in tRNA = pseudouridine(38/39/40) in tRNA. Functionally, formation of pseudouridine at positions 38, 39 and 40 in the anticodon stem and loop of transfer RNAs. The chain is tRNA pseudouridine synthase A from Haemophilus ducreyi (strain 35000HP / ATCC 700724).